Consider the following 521-residue polypeptide: Bifunctional purine biosynthesis protein PurH (521 aa).

Residues 1 to 145 enclose the MGS-like domain; sequence MIKQALISVS…KNHRDVTVVV (145 aa).

This sequence belongs to the PurH family.

It catalyses the reaction (6R)-10-formyltetrahydrofolate + 5-amino-1-(5-phospho-beta-D-ribosyl)imidazole-4-carboxamide = 5-formamido-1-(5-phospho-D-ribosyl)imidazole-4-carboxamide + (6S)-5,6,7,8-tetrahydrofolate. It carries out the reaction IMP + H2O = 5-formamido-1-(5-phospho-D-ribosyl)imidazole-4-carboxamide. It functions in the pathway purine metabolism; IMP biosynthesis via de novo pathway; 5-formamido-1-(5-phospho-D-ribosyl)imidazole-4-carboxamide from 5-amino-1-(5-phospho-D-ribosyl)imidazole-4-carboxamide (10-formyl THF route): step 1/1. Its pathway is purine metabolism; IMP biosynthesis via de novo pathway; IMP from 5-formamido-1-(5-phospho-D-ribosyl)imidazole-4-carboxamide: step 1/1. The polypeptide is Bifunctional purine biosynthesis protein PurH (Burkholderia ambifaria (strain ATCC BAA-244 / DSM 16087 / CCUG 44356 / LMG 19182 / AMMD) (Burkholderia cepacia (strain AMMD))).